The following is a 565-amino-acid chain: Transmembrane 7 superfamily member 3 (565 aa).

Residues 1 to 21 (MWRLRLLVLAVLAAGSAEAQA) form the signal peptide. N-linked (GlcNAc...) asparagine glycans are attached at residues N22, N56, N70, and N259. 7 consecutive transmembrane segments (helical) span residues 287–307 (VSTK…CFFG), 311–331 (WKTE…YILI), 341–361 (VRLV…VASW), 364–384 (FGIL…LVSS), 402–422 (VFWV…LGCL), 427–447 (ILAC…SYMF), and 478–498 (NDYI…TLQI).

The protein resides in the cell membrane. Involved in the inhibition of cytokine-induced death of pancreatic beta cells. Involved in the promotion of insulin secretion from pancreatic beta cells. Is a downstream transcriptional target of p53/TP53, and acts as a pro-survival homeostatic factor that attenuates the development of cellular stress. Maintains protein homeostasis and promotes cell survival through attenuation of endoplasmic reticulum (ER) stress and the subsequent induction of unfolded protein response (UPR). The polypeptide is Transmembrane 7 superfamily member 3 (Tm7sf3) (Rattus norvegicus (Rat)).